The following is a 406-amino-acid chain: Transposase for insertion sequence element IS1001 (406 aa).

The protein belongs to the transposase 12 family.

In terms of biological role, involved in the transposition of the insertion sequence. This is Transposase for insertion sequence element IS1001 (tnpA) from Bordetella parapertussis.